A 339-amino-acid polypeptide reads, in one-letter code: N-acetylornithine carbamoyltransferase (339 aa).

Carbamoyl phosphate is bound by residues 49 to 52 (SMRT), W77, and R112. N(2)-acetyl-L-ornithine is bound at residue E144. Residue 148 to 151 (HPCQ) coordinates carbamoyl phosphate. 2 residues coordinate N(2)-acetyl-L-ornithine: K252 and L295. A carbamoyl phosphate-binding site is contributed by 294–295 (CL). Residue K302 is modified to N6-carboxylysine. Position 322 (R322) interacts with carbamoyl phosphate.

The protein belongs to the aspartate/ornithine carbamoyltransferase superfamily. AOTCase family. In terms of assembly, homotrimer.

It localises to the cytoplasm. The enzyme catalyses N(2)-acetyl-L-ornithine + carbamoyl phosphate = N(2)-acetyl-L-citrulline + phosphate + H(+). Its pathway is amino-acid biosynthesis; L-arginine biosynthesis. Its activity is regulated as follows. Carboxylation at Lys-302 increases the catalytic activity of the enzyme. Is potently inhibited by N(alpha)-acetyl-N(delta)-phosphonoacetyl-L-ornithine (PALAO). Catalyzes the transfer of the carbamoyl group from carbamoyl phosphate to the delta-amino group of N(2)-acetyl-L-ornithine to produce N(2)-acetyl-L-citrulline. This is a step in an alternative arginine biosynthesis pathway. The enzyme has no activity with ornithine. This Xanthomonas campestris pv. campestris (strain ATCC 33913 / DSM 3586 / NCPPB 528 / LMG 568 / P 25) protein is N-acetylornithine carbamoyltransferase.